The following is a 160-amino-acid chain: MTGKTHIMGGIASCTAAAYYYGFDPVLMAASGAVGALIPDICHTQSKIGRKFPILSKVVSSVFGHRTFTHSLLFMLIMFFITSTYIPDKNISAGLMIGMASHLILDAWTVNGIKLLFPSTIRVRLPLYMKTGSFSEQLVLAGLTLASCYYFYMLFHGRMF.

The N-terminal stretch at 1-29 (MTGKTHIMGGIASCTAAAYYYGFDPVLMA) is a signal peptide. The next 2 helical transmembrane spans lie at 67–87 (TFTH…TYIP) and 137–157 (QLVL…LFHG).

It to E.coli YdjM.

The protein resides in the cell membrane. This is an uncharacterized protein from Bacillus subtilis (strain 168).